The primary structure comprises 471 residues: ATP synthase subunit beta (471 aa).

ATP is bound at residue 156–163 (GGAGVGKT).

It belongs to the ATPase alpha/beta chains family. In terms of assembly, F-type ATPases have 2 components, CF(1) - the catalytic core - and CF(0) - the membrane proton channel. CF(1) has five subunits: alpha(3), beta(3), gamma(1), delta(1), epsilon(1). CF(0) has three main subunits: a(1), b(2) and c(9-12). The alpha and beta chains form an alternating ring which encloses part of the gamma chain. CF(1) is attached to CF(0) by a central stalk formed by the gamma and epsilon chains, while a peripheral stalk is formed by the delta and b chains.

It is found in the cell membrane. The catalysed reaction is ATP + H2O + 4 H(+)(in) = ADP + phosphate + 5 H(+)(out). In terms of biological role, produces ATP from ADP in the presence of a proton gradient across the membrane. The catalytic sites are hosted primarily by the beta subunits. The chain is ATP synthase subunit beta from Macrococcus caseolyticus (strain JCSC5402) (Macrococcoides caseolyticum).